The primary structure comprises 267 residues: Hydroxyethylthiazole kinase 2 (267 aa).

Met41 is a substrate binding site. ATP-binding residues include Lys116 and Thr166. Gly193 is a binding site for substrate.

The protein belongs to the Thz kinase family. Requires Mg(2+) as cofactor.

It carries out the reaction 5-(2-hydroxyethyl)-4-methylthiazole + ATP = 4-methyl-5-(2-phosphooxyethyl)-thiazole + ADP + H(+). The protein operates within cofactor biosynthesis; thiamine diphosphate biosynthesis; 4-methyl-5-(2-phosphoethyl)-thiazole from 5-(2-hydroxyethyl)-4-methylthiazole: step 1/1. Functionally, catalyzes the phosphorylation of the hydroxyl group of 4-methyl-5-beta-hydroxyethylthiazole (THZ). The polypeptide is Hydroxyethylthiazole kinase 2 (Streptococcus pneumoniae (strain Hungary19A-6)).